A 203-amino-acid polypeptide reads, in one-letter code: Holliday junction branch migration complex subunit RuvA (203 aa).

The segment at Met1–Asn64 is domain I. Positions Asn65 to Pro142 are domain II. Residues Ala143–Pro154 form a flexible linker region. The segment at Gly155–Leu203 is domain III.

This sequence belongs to the RuvA family. Homotetramer. Forms an RuvA(8)-RuvB(12)-Holliday junction (HJ) complex. HJ DNA is sandwiched between 2 RuvA tetramers; dsDNA enters through RuvA and exits via RuvB. An RuvB hexamer assembles on each DNA strand where it exits the tetramer. Each RuvB hexamer is contacted by two RuvA subunits (via domain III) on 2 adjacent RuvB subunits; this complex drives branch migration. In the full resolvosome a probable DNA-RuvA(4)-RuvB(12)-RuvC(2) complex forms which resolves the HJ.

The protein localises to the cytoplasm. The RuvA-RuvB-RuvC complex processes Holliday junction (HJ) DNA during genetic recombination and DNA repair, while the RuvA-RuvB complex plays an important role in the rescue of blocked DNA replication forks via replication fork reversal (RFR). RuvA specifically binds to HJ cruciform DNA, conferring on it an open structure. The RuvB hexamer acts as an ATP-dependent pump, pulling dsDNA into and through the RuvAB complex. HJ branch migration allows RuvC to scan DNA until it finds its consensus sequence, where it cleaves and resolves the cruciform DNA. The polypeptide is Holliday junction branch migration complex subunit RuvA (Salmonella schwarzengrund (strain CVM19633)).